The sequence spans 116 residues: NADPH-dependent 7-cyano-7-deazaguanine reductase (116 aa).

Cys31 serves as the catalytic Thioimide intermediate. The active-site Proton donor is Asp38. Substrate is bound by residues Val53–Leu55 and Tyr72–Glu73.

Belongs to the GTP cyclohydrolase I family. QueF type 1 subfamily.

The protein localises to the cytoplasm. The enzyme catalyses 7-aminomethyl-7-carbaguanine + 2 NADP(+) = 7-cyano-7-deazaguanine + 2 NADPH + 3 H(+). It functions in the pathway tRNA modification; tRNA-queuosine biosynthesis. Its function is as follows. Catalyzes the NADPH-dependent reduction of 7-cyano-7-deazaguanine (preQ0) to 7-aminomethyl-7-deazaguanine (preQ1). This Chloroherpeton thalassium (strain ATCC 35110 / GB-78) protein is NADPH-dependent 7-cyano-7-deazaguanine reductase.